The following is a 323-amino-acid chain: Acetyl-coenzyme A carboxylase carboxyl transferase subunit alpha (323 aa).

The 255-residue stretch at 39-293 (RLSKKSQQLT…RRALADSLRQ (255 aa)) folds into the CoA carboxyltransferase C-terminal domain.

It belongs to the AccA family. Acetyl-CoA carboxylase is a heterohexamer composed of biotin carboxyl carrier protein (AccB), biotin carboxylase (AccC) and two subunits each of ACCase subunit alpha (AccA) and ACCase subunit beta (AccD).

It localises to the cytoplasm. The enzyme catalyses N(6)-carboxybiotinyl-L-lysyl-[protein] + acetyl-CoA = N(6)-biotinyl-L-lysyl-[protein] + malonyl-CoA. Its pathway is lipid metabolism; malonyl-CoA biosynthesis; malonyl-CoA from acetyl-CoA: step 1/1. Component of the acetyl coenzyme A carboxylase (ACC) complex. First, biotin carboxylase catalyzes the carboxylation of biotin on its carrier protein (BCCP) and then the CO(2) group is transferred by the carboxyltransferase to acetyl-CoA to form malonyl-CoA. In Burkholderia vietnamiensis (strain G4 / LMG 22486) (Burkholderia cepacia (strain R1808)), this protein is Acetyl-coenzyme A carboxylase carboxyl transferase subunit alpha.